The chain runs to 449 residues: Exodeoxyribonuclease 7 large subunit (449 aa).

The protein belongs to the XseA family. As to quaternary structure, heterooligomer composed of large and small subunits.

The protein localises to the cytoplasm. It catalyses the reaction Exonucleolytic cleavage in either 5'- to 3'- or 3'- to 5'-direction to yield nucleoside 5'-phosphates.. In terms of biological role, bidirectionally degrades single-stranded DNA into large acid-insoluble oligonucleotides, which are then degraded further into small acid-soluble oligonucleotides. The polypeptide is Exodeoxyribonuclease 7 large subunit (Salmonella newport (strain SL254)).